The following is a 364-amino-acid chain: Histidinol-phosphate aminotransferase 1 (364 aa).

Residue Lys-211 is modified to N6-(pyridoxal phosphate)lysine.

It belongs to the class-II pyridoxal-phosphate-dependent aminotransferase family. Histidinol-phosphate aminotransferase subfamily. Homodimer. The cofactor is pyridoxal 5'-phosphate.

The enzyme catalyses L-histidinol phosphate + 2-oxoglutarate = 3-(imidazol-4-yl)-2-oxopropyl phosphate + L-glutamate. It functions in the pathway amino-acid biosynthesis; L-histidine biosynthesis; L-histidine from 5-phospho-alpha-D-ribose 1-diphosphate: step 7/9. This Legionella pneumophila subsp. pneumophila (strain Philadelphia 1 / ATCC 33152 / DSM 7513) protein is Histidinol-phosphate aminotransferase 1.